The chain runs to 464 residues: Glutamate--tRNA ligase (464 aa).

The 'HIGH' region signature appears at 12-22 (PSPTGYLHIGG). The 'KMSKS' region signature appears at 254–258 (KLSKR). Position 257 (K257) interacts with ATP.

This sequence belongs to the class-I aminoacyl-tRNA synthetase family. Glutamate--tRNA ligase type 1 subfamily. In terms of assembly, monomer.

Its subcellular location is the cytoplasm. It catalyses the reaction tRNA(Glu) + L-glutamate + ATP = L-glutamyl-tRNA(Glu) + AMP + diphosphate. Functionally, catalyzes the attachment of glutamate to tRNA(Glu) in a two-step reaction: glutamate is first activated by ATP to form Glu-AMP and then transferred to the acceptor end of tRNA(Glu). In Mycoplasma mobile (strain ATCC 43663 / 163K / NCTC 11711) (Mesomycoplasma mobile), this protein is Glutamate--tRNA ligase.